The following is a 513-amino-acid chain: Putative zinc finger CCCH domain-containing protein 51 (513 aa).

The disordered stretch occupies residues 155 to 180; that stretch reads SMPRNSPNAGRNLVGHPHSSSKSSSK. The segment covering 170–180 has biased composition (low complexity); it reads HPHSSSKSSSK. A C3H1-type zinc finger spans residues 176–204; sequence KSSSKPCHFHFFRGYCKKGVNCQFFHGSV. The 82-residue stretch at 218-299 folds into the HTH OST-type domain; that stretch reads SLSKLDMEIR…HGQYHVVLVE (82 aa). The region spanning 325–411 is the RRM domain; that stretch reads NQIYMTFPVH…SELRMTWLKS (87 aa).

The polypeptide is Putative zinc finger CCCH domain-containing protein 51 (Oryza sativa subsp. japonica (Rice)).